The chain runs to 451 residues: Phosphoglucosamine mutase (451 aa).

Ser-107 (phosphoserine intermediate) is an active-site residue. Residues Ser-107, Asp-246, Asp-248, and Asp-250 each coordinate Mg(2+). Residue Ser-107 is modified to Phosphoserine.

Belongs to the phosphohexose mutase family. Requires Mg(2+) as cofactor. Activated by phosphorylation.

It catalyses the reaction alpha-D-glucosamine 1-phosphate = D-glucosamine 6-phosphate. Catalyzes the conversion of glucosamine-6-phosphate to glucosamine-1-phosphate. The protein is Phosphoglucosamine mutase of Burkholderia vietnamiensis (strain G4 / LMG 22486) (Burkholderia cepacia (strain R1808)).